The primary structure comprises 65 residues: Large ribosomal subunit protein bL35 (65 aa).

A disordered region spans residues 1–22 (MPKIKTVRGAAKRFKKTGKGGF). Over residues 10-22 (AAKRFKKTGKGGF) the composition is skewed to basic residues.

This sequence belongs to the bacterial ribosomal protein bL35 family.

The chain is Large ribosomal subunit protein bL35 from Klebsiella pneumoniae (strain 342).